A 212-amino-acid chain; its full sequence is MRFIALLISFFALLKVISAISGVDISSASTIESFTCLKSAGYDFAIIRAYESLGQVDPNGPHSVYNARDAGIEYVDVYMFPCPTCGNGAGQAETMVNYLKGYNANYGMVWLDIEGPQYWMSQSENVAFFESLVAGLKAEGAHIGVYTSASQWEPIMGGYTGGSEFPLWYAHYDGNPSFSDFSPFNGWSTPSVKQYDDTGDSCGLGFDLNWYP.

Residues 1 to 19 (MRFIALLISFFALLKVISA) form the signal peptide. The 193-residue stretch at 20-212 (ISGVDISSAS…GLGFDLNWYP (193 aa)) folds into the Ch-type lysozyme domain. Active-site residues include aspartate 24, aspartate 112, and glutamate 114.

The protein belongs to the glycosyl hydrolase 25 family.

The protein localises to the secreted. It catalyses the reaction Hydrolysis of (1-&gt;4)-beta-linkages between N-acetylmuramic acid and N-acetyl-D-glucosamine residues in a peptidoglycan and between N-acetyl-D-glucosamine residues in chitodextrins.. This is Probable GH family 25 lysozyme 2 from Dictyostelium discoideum (Social amoeba).